The following is a 75-amino-acid chain: Small ribosomal subunit protein bS18 (75 aa).

The protein belongs to the bacterial ribosomal protein bS18 family. Part of the 30S ribosomal subunit. Forms a tight heterodimer with protein bS6.

Functionally, binds as a heterodimer with protein bS6 to the central domain of the 16S rRNA, where it helps stabilize the platform of the 30S subunit. This is Small ribosomal subunit protein bS18 from Aliivibrio fischeri (strain ATCC 700601 / ES114) (Vibrio fischeri).